Consider the following 426-residue polypeptide: Immunoglobulin mu Fc receptor (426 aa).

Residues 1 to 16 form the signal peptide; sequence MNLWLWLLYFLPVSGT. The Ig-like domain occupies 24 to 121; the sequence is RLEVELGGSV…GKTQKVTLNV (98 aa). 2 disulfide bridges follow: Cys37/Cys103 and Cys49/Cys58. Residue Thr91 is modified to Phosphothreonine. A disordered region spans residues 178 to 212; it reads KTEAPPVHQPSTNTSVSRHPRVYGASSETPTKPSA. The chain crosses the membrane as a helical span at residues 267–287; that stretch reads FHILIPTFLGFLLLVLLGLVV. 2 disordered regions span residues 306–346 and 401–426; these read RRMR…REPD and DSND…PSRQ. Positions 415–426 are enriched in pro residues; that stretch reads PSKPPGPRPSRQ.

As to quaternary structure, interacts (via Ig-like domain) with IGHM (via CH4/Cmu4 domain), both secreted and membrane-bound IgM; the interaction is glycan-independent and multivalent theoretically involving up to eight binding sites for the IgM pentamer. Post-translationally, phosphorylated on both Tyr and Ser residues. In terms of processing, O-glycosylated. Sialylated. O-linked glycans regulate trafficking to the plasma membrane.

The protein resides in the cell membrane. It localises to the early endosome membrane. Its subcellular location is the golgi apparatus. It is found in the trans-Golgi network membrane. The protein localises to the lysosome membrane. Functionally, high-affinity Fc receptor for immunoglobulin M (IgM), both secreted and membrane-bound IgM. Primarily regulates IgM transport and homeostasis. In lymphoid cells, enables exocytosis of membrane-bound IgM on the plasma membrane as well as endocytosis of IgM-antigen complexes toward lysosomes for degradation. In mucosal epithelium, mediates retrotranscytosis of antigen-IgM complexes across mucosal M cells toward antigen-presenting cells in mucosal lymphoid tissues. Triggers costimulatory signaling and mediates most of IgM effector functions involved in B cell development and primary immune response to infection. Likely limits tonic IgM BCR signaling to self-antigens for proper negative selection of autoreactive B cells in the bone marrow and for the maintenance of regulatory B cell pool in peripheral lymphoid organs. Mediates antibody responses to T cell-dependent and T cell-independent antigens and promotes induction of an efficient neutralizing IgG response. Engages in cross-talk with antigen-receptor signaling via the non-canonical NF-kappa-B, MAP kinases and calcium signaling pathways. The sequence is that of Immunoglobulin mu Fc receptor from Rattus norvegicus (Rat).